The chain runs to 267 residues: Hydroxyethylthiazole kinase (267 aa).

Position 46 (Met46) interacts with substrate. ATP contacts are provided by Arg122 and Thr168. Substrate is bound at residue Gly195.

Belongs to the Thz kinase family. The cofactor is Mg(2+).

It carries out the reaction 5-(2-hydroxyethyl)-4-methylthiazole + ATP = 4-methyl-5-(2-phosphooxyethyl)-thiazole + ADP + H(+). It participates in cofactor biosynthesis; thiamine diphosphate biosynthesis; 4-methyl-5-(2-phosphoethyl)-thiazole from 5-(2-hydroxyethyl)-4-methylthiazole: step 1/1. Catalyzes the phosphorylation of the hydroxyl group of 4-methyl-5-beta-hydroxyethylthiazole (THZ). In Moorella thermoacetica (strain ATCC 39073 / JCM 9320), this protein is Hydroxyethylthiazole kinase.